The primary structure comprises 555 residues: CTP synthase (555 aa).

The tract at residues 1–270 (MTKFVFVTGG…DGLICDKLRL (270 aa)) is amidoligase domain. Ser-13 serves as a coordination point for CTP. Residue Ser-13 participates in UTP binding. Residues 14 to 19 (SLGKGI) and Asp-71 each bind ATP. 2 residues coordinate Mg(2+): Asp-71 and Glu-144. Residues 151 to 153 (DIE), 191 to 196 (KTKPTQ), and Lys-227 each bind CTP. Residues 191–196 (KTKPTQ) and Lys-227 contribute to the UTP site. The 253-residue stretch at 295-547 (NIVMVGKYVE…IKAALDHQAA (253 aa)) folds into the Glutamine amidotransferase type-1 domain. Gly-356 provides a ligand contact to L-glutamine. Residue Cys-383 is the Nucleophile; for glutamine hydrolysis of the active site. Residues 384 to 387 (LGMQ), Glu-407, and Arg-473 each bind L-glutamine. Active-site residues include His-520 and Glu-522.

Belongs to the CTP synthase family. In terms of assembly, homotetramer.

The enzyme catalyses UTP + L-glutamine + ATP + H2O = CTP + L-glutamate + ADP + phosphate + 2 H(+). It catalyses the reaction L-glutamine + H2O = L-glutamate + NH4(+). It carries out the reaction UTP + NH4(+) + ATP = CTP + ADP + phosphate + 2 H(+). Its pathway is pyrimidine metabolism; CTP biosynthesis via de novo pathway; CTP from UDP: step 2/2. With respect to regulation, allosterically activated by GTP, when glutamine is the substrate; GTP has no effect on the reaction when ammonia is the substrate. The allosteric effector GTP functions by stabilizing the protein conformation that binds the tetrahedral intermediate(s) formed during glutamine hydrolysis. Inhibited by the product CTP, via allosteric rather than competitive inhibition. In terms of biological role, catalyzes the ATP-dependent amination of UTP to CTP with either L-glutamine or ammonia as the source of nitrogen. Regulates intracellular CTP levels through interactions with the four ribonucleotide triphosphates. This chain is CTP synthase, found in Albidiferax ferrireducens (strain ATCC BAA-621 / DSM 15236 / T118) (Rhodoferax ferrireducens).